A 209-amino-acid chain; its full sequence is Large ribosomal subunit protein uL3 (209 aa).

The disordered stretch occupies residues 127-151; it reads SGGPSSHGSKFHRHLGGTGQATTPA.

This sequence belongs to the universal ribosomal protein uL3 family. As to quaternary structure, part of the 50S ribosomal subunit. Forms a cluster with proteins L14 and L19.

In terms of biological role, one of the primary rRNA binding proteins, it binds directly near the 3'-end of the 23S rRNA, where it nucleates assembly of the 50S subunit. The chain is Large ribosomal subunit protein uL3 from Borrelia duttonii (strain Ly).